The sequence spans 252 residues: uncharacterized protein (252 aa).

In terms of domain architecture, ABC transporter spans 13 to 247 (ITLENVNKWY…PKSERTRAFL (235 aa)). An ATP-binding site is contributed by 45 to 52 (GPSGSGKS).

Belongs to the ABC transporter superfamily.

It is found in the cell inner membrane. In terms of biological role, probably part of a binding-protein-dependent transport system YdhWXYZ for an amino acid. Probably responsible for energy coupling to the transport system. This is an uncharacterized protein from Escherichia coli (strain K12).